Consider the following 160-residue polypeptide: Cytochrome b6-f complex subunit 4 (160 aa).

3 helical membrane-spanning segments follow: residues Leu36–Val56, Leu95–Glu115, and Ala131–Ile151.

Belongs to the cytochrome b family. PetD subfamily. The 4 large subunits of the cytochrome b6-f complex are cytochrome b6, subunit IV (17 kDa polypeptide, PetD), cytochrome f and the Rieske protein, while the 4 small subunits are PetG, PetL, PetM and PetN. The complex functions as a dimer.

Its subcellular location is the cellular thylakoid membrane. Component of the cytochrome b6-f complex, which mediates electron transfer between photosystem II (PSII) and photosystem I (PSI), cyclic electron flow around PSI, and state transitions. The sequence is that of Cytochrome b6-f complex subunit 4 from Prochlorococcus marinus (strain SARG / CCMP1375 / SS120).